A 376-amino-acid polypeptide reads, in one-letter code: N-acetyldiaminopimelate deacetylase (376 aa).

The active site involves D69. Catalysis depends on E128, which acts as the Proton acceptor.

This sequence belongs to the peptidase M20A family. N-acetyldiaminopimelate deacetylase subfamily.

It carries out the reaction N-acetyl-(2S,6S)-2,6-diaminopimelate + H2O = (2S,6S)-2,6-diaminopimelate + acetate. It functions in the pathway amino-acid biosynthesis; L-lysine biosynthesis via DAP pathway; LL-2,6-diaminopimelate from (S)-tetrahydrodipicolinate (acetylase route): step 3/3. Catalyzes the conversion of N-acetyl-diaminopimelate to diaminopimelate and acetate. This chain is N-acetyldiaminopimelate deacetylase, found in Streptococcus pneumoniae (strain CGSP14).